Here is a 254-residue protein sequence, read N- to C-terminus: Thiazole synthase (254 aa).

Catalysis depends on K95, which acts as the Schiff-base intermediate with DXP. 1-deoxy-D-xylulose 5-phosphate contacts are provided by residues G156, 182–183, and 204–205; these read AG and NT.

Belongs to the ThiG family. In terms of assembly, homotetramer. Forms heterodimers with either ThiH or ThiS.

The protein localises to the cytoplasm. It carries out the reaction [ThiS sulfur-carrier protein]-C-terminal-Gly-aminoethanethioate + 2-iminoacetate + 1-deoxy-D-xylulose 5-phosphate = [ThiS sulfur-carrier protein]-C-terminal Gly-Gly + 2-[(2R,5Z)-2-carboxy-4-methylthiazol-5(2H)-ylidene]ethyl phosphate + 2 H2O + H(+). The protein operates within cofactor biosynthesis; thiamine diphosphate biosynthesis. In terms of biological role, catalyzes the rearrangement of 1-deoxy-D-xylulose 5-phosphate (DXP) to produce the thiazole phosphate moiety of thiamine. Sulfur is provided by the thiocarboxylate moiety of the carrier protein ThiS. In vitro, sulfur can be provided by H(2)S. The sequence is that of Thiazole synthase from Vibrio atlanticus (strain LGP32) (Vibrio splendidus (strain Mel32)).